The primary structure comprises 765 residues: Endosialin (765 aa).

Positions 1 to 17 (MLLRLLLAWVAAVPALG) are cleaved as a signal peptide. Residues 18-695 (QVPWTPEPRA…GQSQRDDRWL (678 aa)) lie on the Extracellular side of the membrane. One can recognise a C-type lectin domain in the interval 30 to 156 (GPSSCYALFP…CTLAVDGYLC (127 aa)). 6 disulfides stabilise this stretch: cysteine 131/cysteine 147, cysteine 164/cysteine 213, cysteine 203/cysteine 230, cysteine 316/cysteine 326, cysteine 322/cysteine 335, and cysteine 337/cysteine 350. One can recognise a Sushi domain in the interval 162–232 (GACPALPLEV…WSQTGPLCPG (71 aa)). The EGF-like; calcium-binding domain occupies 312-351 (DTDECQIAGVCQQMCVNYVGGFECYCSEGHELEADGISCS). O-linked (GalNAc...) threonine glycosylation is found at threonine 401, threonine 428, threonine 448, threonine 456, threonine 459, and threonine 466. Residues serine 467 and serine 470 are each glycosylated (O-linked (GalNAc...) serine). O-linked (GalNAc...) threonine glycosylation occurs at threonine 472. An O-linked (GalNAc...) serine glycan is attached at serine 477. O-linked (GalNAc...) threonine glycosylation is found at threonine 488, threonine 517, threonine 520, threonine 535, threonine 552, threonine 554, threonine 556, threonine 570, threonine 571, threonine 604, and threonine 613. The segment at 548–675 (MSPDTHTITY…QLPSVPSTAA (128 aa)) is disordered. Residues 622-633 (PAFPSSPLPPQR) show a composition bias toward pro residues. 2 O-linked (GalNAc...) serine glycosylation sites follow: serine 626 and serine 627. O-linked (GalNAc...) threonine glycans are attached at residues threonine 635 and threonine 638. The segment covering 635 to 647 (TNQTSSISPTHSY) has biased composition (polar residues). 2 O-linked (GalNAc...) serine glycosylation sites follow: serine 639 and serine 640. An O-linked (GalNAc...) threonine glycan is attached at threonine 644. O-linked (GalNAc...) serine glycosylation occurs at serine 663. O-linked (GalNAc...) threonine glycosylation is present at threonine 673. The helical transmembrane segment at 696-716 (LVALLVPTCVFLVVLLALGIV) threads the bilayer. Topologically, residues 717–765 (YCTRCGSHAPNKRITDCYRWVTHAGNKSSTEPMPPRGSLTGVQTCRTSV) are cytoplasmic. At serine 754 the chain carries Phosphoserine.

Interacts with PDGFRA; this interaction promotes PDGF receptor signaling pathway. Interacts with integrin beta-1/ITGB1. Interacts with insulin receptor/INSR; this interaction diminishes INSR autophosphorylation. In terms of processing, O-glycosylated by sialylated oligosaccharides. Post-translationally, may be N-glycosylated. Expressed in cell lines derived from endothelial cells, embryonic fibroblasts and preadipocytes. Expressed in skeletal muscle by a subset of pericytes.

The protein localises to the membrane. Functionally, cell surface glycoprotein involved in various biological processes including angiogenesis, immune response modulation, and tissue remodeling and repair. Participates in pericyte proliferation through positive modulation of the PDGF receptor signaling pathway. Acts as a scaffold for factor X, triggering allosteric changes and the spatial re-alignment of factor X with the TF-factor VIIa complex, thereby enhancing coagulation activation. Modulates the insulin signaling pathway by interacting with insulin receptor/INSR and by diminishing its capacity to be autophosphorylated in response to insulin. Also regulates LPS-induced inflammatory responses in macrophages by favoring production of proinflammatory cytokines. This Mus musculus (Mouse) protein is Endosialin (Cd248).